A 311-amino-acid chain; its full sequence is DPRVRKQYIQEQGAPIVIKADGLAAGKGVTVAMTLEEAYKAVDSMLVQGDFGSAGCRVIVEEFLEGEEASFFALVDGENAIPLESAQDHKRVGDGDTGPNTGGMGAYSPAPVLTKELQSIVMDSIIIPTVKGMSAEGSKFVGVLYAGLMIEKKSGMPKLIEYNVRFGDPECQVLMVRLESDLVQVLLAACRGELNGVSLKWSPGSAMVVVMASKGYPGSYQKGTVIENLEEAEAVAPGIKIFHAGTAFDSEGRFIATGGRVLGVTAKGNDLEEACDRAYLAVENVNWPGGFLPSGYWLESSTSETSMLERE.

The ATP-grasp domain maps to 1-191; that stretch reads DPRVRKQYIQ…LVQVLLAACR (191 aa).

It belongs to the GARS family.

It localises to the plastid. The protein resides in the chloroplast. It carries out the reaction 5-phospho-beta-D-ribosylamine + glycine + ATP = N(1)-(5-phospho-beta-D-ribosyl)glycinamide + ADP + phosphate + H(+). It functions in the pathway purine metabolism; IMP biosynthesis via de novo pathway; N(1)-(5-phospho-D-ribosyl)glycinamide from 5-phospho-alpha-D-ribose 1-diphosphate: step 2/2. The protein is Phosphoribosylamine--glycine ligase (PUR2) of Vigna unguiculata (Cowpea).